We begin with the raw amino-acid sequence, 796 residues long: Pathogenesis-related homeodomain protein (796 aa).

2 disordered regions span residues Lys-34 to Cys-57 and Val-80 to Val-99. Residues Lys-81–Arg-90 show a composition bias toward basic residues. Residues His-190 to Lys-247 form a PHD-type zinc finger. Disordered regions lie at residues Ser-282–Ser-347, Leu-393–Val-422, and Asn-511–Glu-736. The segment covering Trp-292 to Asp-303 has biased composition (acidic residues). Positions Gly-452–Asn-511 form a DNA-binding region, homeobox. Composition is skewed to polar residues over residues Glu-538–Gln-547 and Ala-560–Cys-569. Over residues Asn-570–Asn-580 the composition is skewed to low complexity. A compositionally biased stretch (polar residues) spans Val-581 to Ser-600. 4 consecutive repeat copies span residues Pro-605–Glu-631, Pro-632–Glu-658, Pro-659–Glu-685, and Pro-686–Glu-712. The tract at residues Pro-605 to Glu-735 is 5 X 27 AA tandem repeats. Basic and acidic residues-rich tracts occupy residues Thr-624–Leu-636, Ala-645–Leu-690, and Val-700–Thr-733. A 5; truncated repeat occupies Ser-713–Glu-735. The leucine-zipper stretch occupies residues Leu-738–Leu-759.

This sequence belongs to the PHD-associated homeobox family.

Its subcellular location is the nucleus. In terms of biological role, specifically binds to the fungal elicitor-responsive DNA element, 5'-CTAATTGTTTA-3', of the gene PR2 promoter. This chain is Pathogenesis-related homeodomain protein (PRH), found in Arabidopsis thaliana (Mouse-ear cress).